The primary structure comprises 441 residues: Polycomb protein EED (441 aa).

The interval 1 to 72 is disordered; the sequence is MSEREVSTAP…PGRKSWGKGK (72 aa). N-acetylserine is present on Ser-2. A phosphoserine mark is found at Ser-2 and Ser-34. A compositionally biased stretch (polar residues) spans 45–61; that stretch reads ESGTNTERPDTPTNTPN. Thr-55 carries the post-translational modification Phosphothreonine. Residue Lys-66 is modified to N6,N6,N6-trimethyllysine; alternate. At Lys-66 the chain carries N6,N6-dimethyllysine; alternate. Lys-66 is modified (N6-methyllysine; alternate). Positions 81–441 are interaction with EZH2; sequence SFKCVNSLKE…ASIWRWDRLR (361 aa). 4 WD repeats span residues 91-134, 142-185, 188-228, and 234-275; these read DHNQ…EIRL, DADE…CIKH, GHGN…LVAI, and GHRD…NAIK. 2 required for interaction with the matrix protein MA of HIV-1 regions span residues 149 to 303 and 301 to 441; these read TCAW…STRD and TRDI…DRLR. Residues Lys-197, Lys-268, and Lys-284 each carry the N6,N6,N6-trimethyllysine; alternate modification. N6,N6-dimethyllysine; alternate occurs at positions 197, 268, and 284. Lys-197, Lys-268, and Lys-284 each carry N6-methyllysine; alternate. WD repeat units lie at residues 304-341, 359-399, and 408-441; these read IHRN…DDID, SQCD…PHKA, and KCGA…DRLR.

Belongs to the WD repeat ESC family. As to quaternary structure, component of the PRC2/EED-EZH2 complex, which includes EED, EZH2, SUZ12, RBBP4 and RBBP7 and possibly AEBP2. The minimum components required for methyltransferase activity of the PRC2/EED-EZH2 complex are EED, EZH2 and SUZ12. Component of the PRC2/EED-EZH1 complex, which includes EED, EZH1, SUZ12, RBBP4 and AEBP2. The PRC2 complex may also interact with DNMT1, DNMT3A, DNMT3B and PHF1 via the EZH2 subunit and with SIRT1 via the SUZ12 subunit. Interacts with HDAC, HDAC2, histone H1 and YY1. May interact with ITGA4, ITGAE and ITGB7. Interacts with CDYL. Interacts with BMAL1. Interacts with KMT2A/MLL1. In terms of assembly, (Microbial infection) May interact with the MA protein of HIV-1. Methylated. Binding to histone H1 'Lys-26' promotes mono-, di-, and trimethylation of internal lysines. As to expression, expressed in brain, colon, heart, kidney, liver, lung, muscle, ovary, peripheral blood leukocytes, pancreas, placenta, prostate, spleen, small intestine, testis, thymus and uterus. Appears to be overexpressed in breast and colon cancer.

The protein localises to the nucleus. The protein resides in the chromosome. Polycomb group (PcG) protein. Component of the PRC2/EED-EZH2 complex, which methylates 'Lys-9' and 'Lys-27' of histone H3, leading to transcriptional repression of the affected target gene. Also recognizes 'Lys-26' trimethylated histone H1 with the effect of inhibiting PRC2 complex methyltransferase activity on nucleosomal histone H3 'Lys-27', whereas H3 'Lys-27' recognition has the opposite effect, enabling the propagation of this repressive mark. The PRC2/EED-EZH2 complex may also serve as a recruiting platform for DNA methyltransferases, thereby linking two epigenetic repression systems. Genes repressed by the PRC2/EED-EZH2 complex include HOXC8, HOXA9, MYT1 and CDKN2A. The protein is Polycomb protein EED of Homo sapiens (Human).